The following is a 300-amino-acid chain: Recombination-associated protein RdgC (300 aa).

This sequence belongs to the RdgC family.

The protein resides in the cytoplasm. It is found in the nucleoid. Its function is as follows. May be involved in recombination. The chain is Recombination-associated protein RdgC from Janthinobacterium sp. (strain Marseille) (Minibacterium massiliensis).